The following is a 1241-amino-acid chain: ATP-dependent helicase/nuclease subunit A (1241 aa).

Positions 12-485 (SQWTDDQWKA…IDLAKNFRSR (474 aa)) constitute a UvrD-like helicase ATP-binding domain. 33 to 40 (AAAGSGKT) serves as a coordination point for ATP. A UvrD-like helicase C-terminal domain is found at 505 to 805 (GEIDYDADAE…RIMTIHKSKG (301 aa)).

Belongs to the helicase family. AddA subfamily. In terms of assembly, heterodimer of AddA and AddB/RexB. It depends on Mg(2+) as a cofactor.

The catalysed reaction is Couples ATP hydrolysis with the unwinding of duplex DNA by translocating in the 3'-5' direction.. It catalyses the reaction ATP + H2O = ADP + phosphate + H(+). In terms of biological role, the heterodimer acts as both an ATP-dependent DNA helicase and an ATP-dependent, dual-direction single-stranded exonuclease. Recognizes the chi site generating a DNA molecule suitable for the initiation of homologous recombination. The AddA nuclease domain is required for chi fragment generation; this subunit has the helicase and 3' -&gt; 5' nuclease activities. The sequence is that of ATP-dependent helicase/nuclease subunit A from Bacillus cereus (strain Q1).